We begin with the raw amino-acid sequence, 249 residues long: Proteasome subunit alpha type-7-1 (249 aa).

Phosphoserine is present on Ser177.

This sequence belongs to the peptidase T1A family. The 26S proteasome consists of a 20S proteasome core and two 19S regulatory subunits. The 20S proteasome core is composed of 28 subunits that are arranged in four stacked rings, resulting in a barrel-shaped structure. The two end rings are each formed by seven alpha subunits, and the two central rings are each formed by seven beta subunits. The catalytic chamber with the active sites is on the inside of the barrel. Interacts with PI31; this interaction is reduced by PI31 ADP-ribosylation.

It localises to the cytoplasm. The protein localises to the nucleus. The proteasome is a multicatalytic proteinase complex which is characterized by its ability to cleave peptides with Arg, Phe, Tyr, Leu, and Glu adjacent to the leaving group at neutral or slightly basic pH. The proteasome has an ATP-dependent proteolytic activity. In Drosophila melanogaster (Fruit fly), this protein is Proteasome subunit alpha type-7-1 (Prosalpha4).